The chain runs to 314 residues: Probable 5-dehydro-4-deoxyglucarate dehydratase (314 aa).

This sequence belongs to the DapA family.

It catalyses the reaction 5-dehydro-4-deoxy-D-glucarate + H(+) = 2,5-dioxopentanoate + CO2 + H2O. It participates in carbohydrate acid metabolism; D-glucarate degradation; 2,5-dioxopentanoate from D-glucarate: step 2/2. The polypeptide is Probable 5-dehydro-4-deoxyglucarate dehydratase (Bradyrhizobium sp. (strain ORS 278)).